A 145-amino-acid chain; its full sequence is Protoporphyrinogen IX oxidase (145 aa).

4 helical membrane passes run 6 to 26 (LWFK…LLYL), 61 to 81 (AMIS…FVAL), 83 to 103 (TWFQ…GLLA), and 123 to 143 (IVNE…IVKP). Position 12 (histidine 12) interacts with heme. Lysine 88 serves as a coordination point for heme.

The protein belongs to the HemJ family. Homodimer. Requires heme b as cofactor.

The protein resides in the cell membrane. It carries out the reaction protoporphyrinogen IX + 3 A = protoporphyrin IX + 3 AH2. It participates in porphyrin-containing compound metabolism; protoporphyrin-IX biosynthesis; protoporphyrin-IX from protoporphyrinogen-IX: step 1/1. Catalyzes the oxidation of protoporphyrinogen IX to protoporphyrin IX. Is involved in the biosynthesis of tetrapyrrole molecules like heme. Does not use oxygen or artificial electron acceptors such as menadione or benzoquinone. The polypeptide is Protoporphyrinogen IX oxidase (Rickettsia prowazekii (strain Madrid E)).